Here is a 614-residue protein sequence, read N- to C-terminus: Protein B602L (614 aa).

31 tandem repeats follow at residues C161–T164, N165–T168, S169–T172, N173–T176, S177–T180, N181–I184, N185–T188, N189–T192, C193–T196, N197–T200, N201–T204, N205–I208, N209–T212, N213–T216, N217–T220, N221–T224, N225–I228, N229–T232, N233–T236, C237–T240, N241–T244, N245–T248, N249–I252, N253–T256, N257–T260, N261–T264, N265–I268, N269–T272, N273–I276, N277–I280, and N281–T284. The 28 X 4 AA tandem repeats of [CNS]-[AV]-[DNS]-[IT] stretch occupies residues C161 to T284.

Belongs to the asfivirus B602L family.

The protein localises to the host cytoplasm. Its function is as follows. Plays an essential role in the assembly of the icosahedral capsid of the virus. Allows the assembly of 3 molecules of hexon protein p72 and formation of a thermostable trimer. This African swine fever virus (isolate Tick/Malawi/Lil 20-1/1983) (ASFV) protein is Protein B602L.